The chain runs to 30 residues: Bacteriocin plantaricin KL-1Y (30 aa).

The protein localises to the secreted. Bacteriocin with activity against species of Lactobacillus, Lactococcus, Pediococcus, Leuconostoc and against B.subtilis and, to a lesser extent, against B.coagulans, B.cereus and species of Enterococcus, Listeria, Kocuria, Staphylococcus, Corynebacterium, Salmonella, Pseudomonas and Escherichia. The polypeptide is Bacteriocin plantaricin KL-1Y (Lactiplantibacillus plantarum (Lactobacillus plantarum)).